Consider the following 160-residue polypeptide: Ubiquitin-like protein ATG12 (160 aa).

The disordered stretch occupies residues 1 to 40; that stretch reads MSETPKDQGPSSPSPSPSPSAASPMPLADNEVAGSGASSP. Gly160 is covalently cross-linked (Glycyl lysine isopeptide (Gly-Lys) (interchain with K-102 in ATG5)).

The protein belongs to the ATG12 family. Forms a conjugate with ATG5. Forms a thioester bond with the 'Cys-196' of ATG10. Interacts with the ATG7 C-terminal 40 amino acids domain. The ATG12-ATG5 conjugate forms a complex with several units of ATG16. The ATG12-ATG5 conjugate also associates with ATG3.

The protein localises to the preautophagosomal structure membrane. Ubiquitin-like protein involved in cytoplasm to vacuole transport (Cvt), autophagy vesicles formation, mitophagy, and nucleophagy. Conjugation with ATG5 through a ubiquitin-like conjugating system involving also ATG7 as an E1-like activating enzyme and ATG10 as an E2-like conjugating enzyme, is essential for its function. The ATG12-ATG5 conjugate acts as an E3-like enzyme which is required for lipidation of ATG8 and ATG8 association to the vesicle membranes. ATG12-ATG5 rearranges the ATG3 catalytic center and enhances its E2 activity. Autophagy is required for proper vegetative growth, asexual/sexual reproduction, and full virulence. Autophagy is particularly involved in the biosynthesis of deoxynivalenol (DON), an important virulence determinant. The polypeptide is Ubiquitin-like protein ATG12 (Gibberella zeae (strain ATCC MYA-4620 / CBS 123657 / FGSC 9075 / NRRL 31084 / PH-1) (Wheat head blight fungus)).